The following is a 517-amino-acid chain: Legumin A (517 aa).

The N-terminal stretch at 1-21 is a signal peptide; the sequence is MAKLLALSLSFCFLLLGGCFA. Intrachain disulfides connect Cys-31–Cys-64 and Cys-107–Cys-339. Residues 36–232 form the Cupin type-1 1 domain; the sequence is LDALEPDNRI…AFNVNRHIVD (197 aa). The interval 249-335 is disordered; it reads VKGGLSIISP…SRRQGDNGLE (87 aa). The region spanning 345–494 is the Cupin type-1 2 domain; sequence LNIGPSSSPD…TFNLQRNEAR (150 aa).

The protein belongs to the 11S seed storage protein (globulins) family. In terms of assembly, hexamer; each subunit is composed of an acidic and a basic chain derived from a single precursor and linked by a disulfide bond.

Functionally, this protein found in the seeds of many leguminous and non-leguminous plants is the source of sulfur-containing amino acids in seed meals. The polypeptide is Legumin A (LEGA) (Pisum sativum (Garden pea)).